A 244-amino-acid chain; its full sequence is NAD-dependent protein deacetylase (244 aa).

The Deacetylase sirtuin-type domain maps to 1 to 244 (MTGEQLAHWI…LSAVQRAVMP (244 aa)). NAD(+) contacts are provided by Ala-22, Thr-26, Phe-33, Arg-34, Gln-103, Ile-105, Asp-106, and His-121. Position 33 (Phe-33) interacts with nicotinamide. Residues Ile-105 and Asp-106 each contribute to the nicotinamide site. The Proton acceptor role is filled by His-121. Residues Cys-129, Cys-132, Cys-150, and Cys-152 each contribute to the Zn(2+) site. Positions 190, 191, 213, and 231 each coordinate NAD(+).

It belongs to the sirtuin family. Class U subfamily. The cofactor is Zn(2+).

The protein localises to the cytoplasm. It catalyses the reaction N(6)-acetyl-L-lysyl-[protein] + NAD(+) + H2O = 2''-O-acetyl-ADP-D-ribose + nicotinamide + L-lysyl-[protein]. In terms of biological role, NAD-dependent protein deacetylase which modulates the activities of several enzymes which are inactive in their acetylated form. The polypeptide is NAD-dependent protein deacetylase (Cutibacterium acnes (strain DSM 16379 / KPA171202) (Propionibacterium acnes)).